An 885-amino-acid chain; its full sequence is Translation initiation factor IF-2 (885 aa).

Over residues 123 to 232 the composition is skewed to basic and acidic residues; the sequence is ETEAKAKAEA…EAERYSDHHI (110 aa). The segment at 123 to 289 is disordered; it reads ETEAKAKAEA…RNRSTAPESM (167 aa). Residues 253–266 are compositionally biased toward basic residues; that stretch reads GRRARNKNTAKTKR. Over residues 267–276 the composition is skewed to basic and acidic residues; it reads GGKDARDGRE. The tr-type G domain maps to 385-554; it reads PRAPVVTIMG…LLQAEVLELK (170 aa). The segment at 394 to 401 is G1; it reads GHVDHGKT. Residue 394–401 coordinates GTP; it reads GHVDHGKT. The G2 stretch occupies residues 419-423; sequence GITQH. The tract at residues 440–443 is G3; it reads DTPG. Residues 440–444 and 494–497 contribute to the GTP site; these read DTPGH and NKMD. Residues 494–497 are G4; it reads NKMD. The G5 stretch occupies residues 530–532; it reads SAK.

The protein belongs to the TRAFAC class translation factor GTPase superfamily. Classic translation factor GTPase family. IF-2 subfamily.

It localises to the cytoplasm. In terms of biological role, one of the essential components for the initiation of protein synthesis. Protects formylmethionyl-tRNA from spontaneous hydrolysis and promotes its binding to the 30S ribosomal subunits. Also involved in the hydrolysis of GTP during the formation of the 70S ribosomal complex. This chain is Translation initiation factor IF-2, found in Shewanella oneidensis (strain ATCC 700550 / JCM 31522 / CIP 106686 / LMG 19005 / NCIMB 14063 / MR-1).